The chain runs to 394 residues: Elongation factor Tu (394 aa).

The tr-type G domain occupies 10–204; sequence KPHINIGTIG…AVDDNIPTPE (195 aa). The G1 stretch occupies residues 19 to 26; sequence GHVDHGKT. 19-26 provides a ligand contact to GTP; that stretch reads GHVDHGKT. Thr-26 lines the Mg(2+) pocket. Positions 60–64 are G2; that stretch reads GITIN. Positions 81–84 are G3; it reads DCPG. GTP is bound by residues 81-85 and 136-139; these read DCPGH and NKID. The segment at 136–139 is G4; sequence NKID. The interval 174-176 is G5; it reads SAL.

It belongs to the TRAFAC class translation factor GTPase superfamily. Classic translation factor GTPase family. EF-Tu/EF-1A subfamily. Monomer.

It localises to the cytoplasm. The enzyme catalyses GTP + H2O = GDP + phosphate + H(+). Functionally, GTP hydrolase that promotes the GTP-dependent binding of aminoacyl-tRNA to the A-site of ribosomes during protein biosynthesis. The protein is Elongation factor Tu of Chlamydia caviae (strain ATCC VR-813 / DSM 19441 / 03DC25 / GPIC) (Chlamydophila caviae).